The primary structure comprises 221 residues: Probable lipoprotein CT_734 (221 aa).

Residues 1–24 form the signal peptide; it reads MKKFIYKYSFGALLLLSGLSGLSS. Residue Cys25 is the site of N-palmitoyl cysteine attachment. Cys25 carries S-diacylglycerol cysteine lipidation.

It belongs to the chlamydial CPn_0875/CT_734/TC_0107 family.

It localises to the cell membrane. This Chlamydia trachomatis serovar D (strain ATCC VR-885 / DSM 19411 / UW-3/Cx) protein is Probable lipoprotein CT_734.